The chain runs to 248 residues: PF03932 family protein CutC (248 aa).

Belongs to the CutC family. In terms of assembly, homodimer.

It localises to the cytoplasm. In Escherichia coli O139:H28 (strain E24377A / ETEC), this protein is PF03932 family protein CutC.